A 64-amino-acid polypeptide reads, in one-letter code: Cytochrome c oxidase subunit 2 (64 aa).

Residues 1 to 14 are Mitochondrial intermembrane-facing; the sequence is MAHPSQLGFQDAAS. The chain crosses the membrane as a helical span at residues 15–45; it reads PMMEELLHFHDHALMVVFLISTFVLYIILTM. Over 46–64 the chain is Mitochondrial matrix; sequence LTTKLTDKLILESHEIEII.

The protein belongs to the cytochrome c oxidase subunit 2 family. In terms of assembly, component of the cytochrome c oxidase (complex IV, CIV), a multisubunit enzyme composed of 14 subunits. The complex is composed of a catalytic core of 3 subunits MT-CO1, MT-CO2 and MT-CO3, encoded in the mitochondrial DNA, and 11 supernumerary subunits COX4I, COX5A, COX5B, COX6A, COX6B, COX6C, COX7A, COX7B, COX7C, COX8 and NDUFA4, which are encoded in the nuclear genome. The complex exists as a monomer or a dimer and forms supercomplexes (SCs) in the inner mitochondrial membrane with NADH-ubiquinone oxidoreductase (complex I, CI) and ubiquinol-cytochrome c oxidoreductase (cytochrome b-c1 complex, complex III, CIII), resulting in different assemblies (supercomplex SCI(1)III(2)IV(1) and megacomplex MCI(2)III(2)IV(2)). Found in a complex with TMEM177, COA6, COX18, COX20, SCO1 and SCO2. Interacts with TMEM177 in a COX20-dependent manner. Interacts with COX20. Interacts with COX16. Cu cation is required as a cofactor.

It localises to the mitochondrion inner membrane. It catalyses the reaction 4 Fe(II)-[cytochrome c] + O2 + 8 H(+)(in) = 4 Fe(III)-[cytochrome c] + 2 H2O + 4 H(+)(out). In terms of biological role, component of the cytochrome c oxidase, the last enzyme in the mitochondrial electron transport chain which drives oxidative phosphorylation. The respiratory chain contains 3 multisubunit complexes succinate dehydrogenase (complex II, CII), ubiquinol-cytochrome c oxidoreductase (cytochrome b-c1 complex, complex III, CIII) and cytochrome c oxidase (complex IV, CIV), that cooperate to transfer electrons derived from NADH and succinate to molecular oxygen, creating an electrochemical gradient over the inner membrane that drives transmembrane transport and the ATP synthase. Cytochrome c oxidase is the component of the respiratory chain that catalyzes the reduction of oxygen to water. Electrons originating from reduced cytochrome c in the intermembrane space (IMS) are transferred via the dinuclear copper A center (CU(A)) of subunit 2 and heme A of subunit 1 to the active site in subunit 1, a binuclear center (BNC) formed by heme A3 and copper B (CU(B)). The BNC reduces molecular oxygen to 2 water molecules using 4 electrons from cytochrome c in the IMS and 4 protons from the mitochondrial matrix. In Geophagus steindachneri (Red hump earth eater), this protein is Cytochrome c oxidase subunit 2 (mt-co2).